Consider the following 459-residue polypeptide: ATP-dependent 6-phosphofructokinase (459 aa).

ATP is bound by residues glycine 89, 154-155 (RG), and 179-182 (GDGG). A Mg(2+)-binding site is contributed by aspartate 180. Substrate-binding positions include 208-210 (TID), 253-255 (MGR), glutamate 309, and 368-371 (YAIR). The active-site Proton acceptor is the aspartate 210.

It belongs to the phosphofructokinase type A (PFKA) family. PPi-dependent PFK group II subfamily. Atypical ATP-dependent clade 'X' sub-subfamily. In terms of assembly, homodimer. Mg(2+) is required as a cofactor.

It is found in the cytoplasm. The catalysed reaction is beta-D-fructose 6-phosphate + ATP = beta-D-fructose 1,6-bisphosphate + ADP + H(+). It functions in the pathway carbohydrate degradation; glycolysis; D-glyceraldehyde 3-phosphate and glycerone phosphate from D-glucose: step 3/4. With respect to regulation, AMP causes 20-40% inhibition and diphosphate causes 20-50% inhibition. ADP, citrate, PEP and FBP have no effect. In terms of biological role, catalyzes the phosphorylation of D-fructose 6-phosphate to fructose 1,6-bisphosphate by ATP, the first committing step of glycolysis. The polypeptide is ATP-dependent 6-phosphofructokinase (Amycolatopsis methanolica).